The primary structure comprises 531 residues: Cation transporter HKT1;3 (531 aa).

At 1 to 46 the chain is on the cytoplasmic side; it reads MNHCLVVSHKKLQTFRTFAASKFSSFTKSAQKSIKYSFQFIYQNNP. A run of 2 helical transmembrane segments spans residues 47–67 and 108–128; these read LFVHVAYFALISFAGYGSLKV and LWVLTILMLIGGEVFTSMLGI. Topologically, residues 129-190 are cytoplasmic; it reads HFMRAEFGTK…GGHVEPKTIK (62 aa). The next 2 helical transmembrane spans lie at 191-211 and 264-284; these read FLGFVVMGYLLITNLGGSLLI and ILLLLILPQILAGNTLFAPCL. Over 285–321 the chain is Cytoplasmic; sequence RLMVWSLEKITGKKDCRYILEYPKAIGYKHLMSTRES. 2 helical membrane-spanning segments follow: residues 322 to 342 and 383 to 403; these read VYLTLTVVSLIILQTVLFLSL and SAILVLYTIMMYLPGYTSFLP. Residues 404–421 are Cytoplasmic-facing; the sequence is RHDGEDSKTEKINKRKGL. Transmembrane regions (helical) follow at residues 422–442 and 494–514; these read LENWIFSHMSYLAIFVMLICI and YGFAGKWSDNGKAILIIVMLF. Residues 515–530 are Cytoplasmic-facing; it reads GRLKTFNMKGGRAWKL.

This sequence belongs to the TrkH potassium transport family. HKT (TC 2.A.38.3) subfamily. In terms of assembly, interacts with CNIH1. In terms of tissue distribution, weakly expressed. In roots, expressed in epidermis, exodermis, cortex, and sieve elements and companion cells of phloem. In mature leaves, expressed in large highly vacuolated cells of the adaxial epidermis, phloem and xylem.

It is found in the endoplasmic reticulum membrane. The protein resides in the golgi apparatus membrane. It carries out the reaction Na(+)(in) = Na(+)(out). Functions as a highly-selective sodium transporter. Does not seem to function as sodium-potassium cotransporter. May be involved in turgor changes for rolling and unrolling of leaves in response to environmental variations. The protein is Cation transporter HKT1;3 of Oryza sativa subsp. japonica (Rice).